The following is a 1035-amino-acid chain: Glycine dehydrogenase (decarboxylating), mitochondrial (1035 aa).

A mitochondrion-targeting transit peptide spans 1–64 (MERARKLANR…KSFNTQQARS (64 aa)). Lys771 is subject to N6-(pyridoxal phosphate)lysine.

The protein belongs to the GcvP family. As to quaternary structure, homodimer. The glycine cleavage system is composed of four proteins: P, T, L and H. It depends on pyridoxal 5'-phosphate as a cofactor.

It is found in the mitochondrion. The catalysed reaction is N(6)-[(R)-lipoyl]-L-lysyl-[glycine-cleavage complex H protein] + glycine + H(+) = N(6)-[(R)-S(8)-aminomethyldihydrolipoyl]-L-lysyl-[glycine-cleavage complex H protein] + CO2. In terms of biological role, the glycine cleavage system catalyzes the degradation of glycine. The P protein binds the alpha-amino group of glycine through its pyridoxal phosphate cofactor; CO(2) is released and the remaining methylamine moiety is then transferred to the lipoamide cofactor of the H protein. In Solanum tuberosum (Potato), this protein is Glycine dehydrogenase (decarboxylating), mitochondrial (GDCSP).